Reading from the N-terminus, the 213-residue chain is Pyrrolidone-carboxylate peptidase (213 aa).

Catalysis depends on residues Glu78, Cys141, and His165.

Belongs to the peptidase C15 family. In terms of assembly, homotetramer.

Its subcellular location is the cytoplasm. The catalysed reaction is Release of an N-terminal pyroglutamyl group from a polypeptide, the second amino acid generally not being Pro.. Removes 5-oxoproline from various penultimate amino acid residues except L-proline. The protein is Pyrrolidone-carboxylate peptidase of Clostridium perfringens (strain SM101 / Type A).